The primary structure comprises 443 residues: Thymidine phosphorylase (443 aa).

This sequence belongs to the thymidine/pyrimidine-nucleoside phosphorylase family. Homodimer.

It catalyses the reaction thymidine + phosphate = 2-deoxy-alpha-D-ribose 1-phosphate + thymine. It functions in the pathway pyrimidine metabolism; dTMP biosynthesis via salvage pathway; dTMP from thymine: step 1/2. Functionally, the enzymes which catalyze the reversible phosphorolysis of pyrimidine nucleosides are involved in the degradation of these compounds and in their utilization as carbon and energy sources, or in the rescue of pyrimidine bases for nucleotide synthesis. This Shewanella frigidimarina (strain NCIMB 400) protein is Thymidine phosphorylase.